Reading from the N-terminus, the 121-residue chain is Small ribosomal subunit protein uS13 (121 aa).

Residues 92–121 (HRMGLPCRGQKTKTNARTRKGPRRGAARRK) form a disordered region. Residues 101–121 (QKTKTNARTRKGPRRGAARRK) are compositionally biased toward basic residues.

It belongs to the universal ribosomal protein uS13 family. As to quaternary structure, part of the 30S ribosomal subunit. Forms a loose heterodimer with protein S19. Forms two bridges to the 50S subunit in the 70S ribosome.

In terms of biological role, located at the top of the head of the 30S subunit, it contacts several helices of the 16S rRNA. In the 70S ribosome it contacts the 23S rRNA (bridge B1a) and protein L5 of the 50S subunit (bridge B1b), connecting the 2 subunits; these bridges are implicated in subunit movement. Contacts the tRNAs in the A and P-sites. The sequence is that of Small ribosomal subunit protein uS13 from Desulfotalea psychrophila (strain LSv54 / DSM 12343).